A 248-amino-acid chain; its full sequence is MGKRLLVQRRGRGGSVFRNPGWKRLGPARYPPYNPEEFKNKVLVGVVKDLLHEPGRGAPLALVEFEDGTKMYMIPPEGLAVGQKIYYGAKAPAVLGSIVEIGNVPEGTIVSNIEIRPGDGGKLARSSGAYALVLAHSNGKTLIQLPSKKVKEVSSEARATIGMVAAGGRIEKPMLKAGKMWHWSRAKSFKYPTVRGKAMSAYAHPAGGGHHPKGLTPAPRNAPPGRKVGHIAPRRTGRKKGASRTPTQ.

Residues 203 to 248 (AHPAGGGHHPKGLTPAPRNAPPGRKVGHIAPRRTGRKKGASRTPTQ) are disordered. Residues 227 to 242 (KVGHIAPRRTGRKKGA) show a composition bias toward basic residues.

Belongs to the universal ribosomal protein uL2 family. In terms of assembly, part of the 50S ribosomal subunit. Forms a bridge to the 30S subunit in the 70S ribosome.

Functionally, one of the primary rRNA binding proteins. Required for association of the 30S and 50S subunits to form the 70S ribosome, for tRNA binding and peptide bond formation. It has been suggested to have peptidyltransferase activity; this is somewhat controversial. Makes several contacts with the 16S rRNA in the 70S ribosome. This chain is Large ribosomal subunit protein uL2, found in Thermofilum pendens (strain DSM 2475 / Hrk 5).